Here is a 170-residue protein sequence, read N- to C-terminus: UPF0260 protein Rpal_2074 (170 aa).

It belongs to the UPF0260 family.

The protein is UPF0260 protein Rpal_2074 of Rhodopseudomonas palustris (strain TIE-1).